A 737-amino-acid chain; its full sequence is LIMR family protein R05D3.2 (737 aa).

Over residues 280-293 (ADIEEENSEQSEDV) the composition is skewed to acidic residues. A disordered region spans residues 280–416 (ADIEEENSEQ…PKKPKNPNFD (137 aa)). A compositionally biased stretch (basic and acidic residues) spans 303-318 (ETIHQVDRSDTPHLED).

The protein belongs to the LIMR family.

This is LIMR family protein R05D3.2 from Caenorhabditis elegans.